We begin with the raw amino-acid sequence, 500 residues long: Glycerol kinase (500 aa).

ADP is bound at residue Thr15. Positions 15, 16, and 17 each coordinate ATP. Position 15 (Thr15) interacts with sn-glycerol 3-phosphate. An ADP-binding site is contributed by Arg19. Residues Arg85, Glu86, Tyr137, and Asp245 each contribute to the sn-glycerol 3-phosphate site. 5 residues coordinate glycerol: Arg85, Glu86, Tyr137, Asp245, and Gln246. ADP-binding residues include Thr267 and Gly310. ATP-binding residues include Thr267, Gly310, Gln314, and Gly411. Residues Gly411 and Asn415 each contribute to the ADP site.

It belongs to the FGGY kinase family.

The catalysed reaction is glycerol + ATP = sn-glycerol 3-phosphate + ADP + H(+). It participates in polyol metabolism; glycerol degradation via glycerol kinase pathway; sn-glycerol 3-phosphate from glycerol: step 1/1. Inhibited by fructose 1,6-bisphosphate (FBP). Functionally, key enzyme in the regulation of glycerol uptake and metabolism. Catalyzes the phosphorylation of glycerol to yield sn-glycerol 3-phosphate. This Aeromonas hydrophila subsp. hydrophila (strain ATCC 7966 / DSM 30187 / BCRC 13018 / CCUG 14551 / JCM 1027 / KCTC 2358 / NCIMB 9240 / NCTC 8049) protein is Glycerol kinase.